A 313-amino-acid polypeptide reads, in one-letter code: Ribose 1,5-bisphosphate isomerase (313 aa).

Residues 17-20 and Arg57 each bind substrate; that span reads RGAA. The active-site Proton acceptor is Cys121. The Proton donor role is filled by Asp190. Substrate is bound by residues 200–201 and Lys226; that span reads NK.

This sequence belongs to the eIF-2B alpha/beta/delta subunits family. R15P isomerase subfamily.

The catalysed reaction is alpha-D-ribose 1,5-bisphosphate = D-ribulose 1,5-bisphosphate. Its function is as follows. Catalyzes the isomerization of ribose 1,5-bisphosphate (R15P) to ribulose 1,5-bisphosphate (RuBP), the CO(2) acceptor and substrate for RubisCO. Functions in an archaeal AMP degradation pathway, together with AMP phosphorylase and RubisCO. The chain is Ribose 1,5-bisphosphate isomerase from Archaeoglobus fulgidus (strain ATCC 49558 / DSM 4304 / JCM 9628 / NBRC 100126 / VC-16).